The primary structure comprises 318 residues: Dehydration-responsive element-binding protein 2E (318 aa).

The segment covering 1-15 (MESYGRKRAWKKGPT) has biased composition (basic residues). The disordered stretch occupies residues 1-24 (MESYGRKRAWKKGPTRGKGGPQNA). Positions 27–84 (EYRGVRQRTWGKWVAEIREPNKRTRLWLGSFATAEEAALAYDEAARRLYGPDAFLNLP) form a DNA-binding region, AP2/ERF. The disordered stretch occupies residues 140-178 (ELKNSSSSPTKPPPRTPTRANPPPPPLPTSSPCSTVTNS). A compositionally biased stretch (pro residues) spans 149–168 (TKPPPRTPTRANPPPPPLPT).

The protein belongs to the AP2/ERF transcription factor family. ERF subfamily.

It is found in the nucleus. Probable transcriptional activator that binds to the DNA sequence 5'-[AG]CCGAC-3' of the cis-acting dehydration-responsive element (DRE). The chain is Dehydration-responsive element-binding protein 2E (DREB2E) from Oryza sativa subsp. japonica (Rice).